We begin with the raw amino-acid sequence, 372 residues long: Tyrosine--tRNA ligase 1 (372 aa).

L-tyrosine contacts are provided by tyrosine 37, tyrosine 169, glutamine 173, aspartate 176, and glutamine 191. A 'KMSKS' region motif is present at residues 246–250 (KMSKS). Lysine 249 lines the ATP pocket.

Belongs to the class-I aminoacyl-tRNA synthetase family. TyrS type 4 subfamily. In terms of assembly, homodimer.

Its subcellular location is the cytoplasm. It catalyses the reaction tRNA(Tyr) + L-tyrosine + ATP = L-tyrosyl-tRNA(Tyr) + AMP + diphosphate + H(+). Its function is as follows. Catalyzes the attachment of tyrosine to tRNA(Tyr) in a two-step reaction: tyrosine is first activated by ATP to form Tyr-AMP and then transferred to the acceptor end of tRNA(Tyr). The chain is Tyrosine--tRNA ligase 1 from Pyrobaculum aerophilum (strain ATCC 51768 / DSM 7523 / JCM 9630 / CIP 104966 / NBRC 100827 / IM2).